The following is a 670-amino-acid chain: Polar flagellar hook-associated protein 2 (670 aa).

Residues 226 to 300 form a disordered region; it reads PLQAPQQPDQ…RSSLRPEERI (75 aa). Residues 257–266 show a composition bias toward acidic residues; it reads AQDDAQDDAS. The segment covering 272 to 283 has biased composition (low complexity); the sequence is AAGAEAAKAGQE. Basic and acidic residues predominate over residues 284-300; sequence AIDKANQRSSLRPEERI. Positions 342 to 428 form a coiled coil; the sequence is GTLTDSYVTT…AQSSFEEYLG (87 aa).

Belongs to the FliD family. As to quaternary structure, homopentamer.

Its subcellular location is the secreted. It localises to the bacterial flagellum. In terms of biological role, required for the morphogenesis and for the elongation of the flagellar filament by facilitating polymerization of the flagellin monomers at the tip of growing filament. Forms a capping structure, which prevents flagellin subunits (transported through the central channel of the flagellum) from leaking out without polymerization at the distal end. Important for swimming motility. The protein is Polar flagellar hook-associated protein 2 (fliDP) of Vibrio parahaemolyticus serotype O3:K6 (strain RIMD 2210633).